The chain runs to 873 residues: DNA mismatch repair protein MutS (873 aa).

625 to 632 lines the ATP pocket; that stretch reads GPNMGGKS.

Belongs to the DNA mismatch repair MutS family.

Functionally, this protein is involved in the repair of mismatches in DNA. It is possible that it carries out the mismatch recognition step. This protein has a weak ATPase activity. This Xanthomonas campestris pv. campestris (strain 8004) protein is DNA mismatch repair protein MutS.